A 156-amino-acid polypeptide reads, in one-letter code: Small ribosomal subunit protein uS7 (156 aa).

It belongs to the universal ribosomal protein uS7 family. In terms of assembly, part of the 30S ribosomal subunit. Contacts proteins S9 and S11.

In terms of biological role, one of the primary rRNA binding proteins, it binds directly to 16S rRNA where it nucleates assembly of the head domain of the 30S subunit. Is located at the subunit interface close to the decoding center, probably blocks exit of the E-site tRNA. The protein is Small ribosomal subunit protein uS7 of Tolumonas auensis (strain DSM 9187 / NBRC 110442 / TA 4).